Reading from the N-terminus, the 273-residue chain is Dermonecrotic toxin LruSicTox-alphaIC1a (273 aa).

The active site involves His5. Positions 25 and 27 each coordinate Mg(2+). Residue His41 is the Nucleophile of the active site. 2 disulfide bridges follow: Cys45–Cys51 and Cys47–Cys190. Residue Asp85 coordinates Mg(2+).

Belongs to the arthropod phospholipase D family. Class II subfamily. Mg(2+) serves as cofactor. Expressed by the venom gland.

The protein localises to the secreted. It carries out the reaction an N-(acyl)-sphingosylphosphocholine = an N-(acyl)-sphingosyl-1,3-cyclic phosphate + choline. The enzyme catalyses an N-(acyl)-sphingosylphosphoethanolamine = an N-(acyl)-sphingosyl-1,3-cyclic phosphate + ethanolamine. The catalysed reaction is a 1-acyl-sn-glycero-3-phosphocholine = a 1-acyl-sn-glycero-2,3-cyclic phosphate + choline. It catalyses the reaction a 1-acyl-sn-glycero-3-phosphoethanolamine = a 1-acyl-sn-glycero-2,3-cyclic phosphate + ethanolamine. In terms of biological role, dermonecrotic toxins cleave the phosphodiester linkage between the phosphate and headgroup of certain phospholipids (sphingolipid and lysolipid substrates), forming an alcohol (often choline) and a cyclic phosphate. This toxin acts on sphingomyelin (SM). It may also act on ceramide phosphoethanolamine (CPE), lysophosphatidylcholine (LPC) and lysophosphatidylethanolamine (LPE), but not on lysophosphatidylserine (LPS), and lysophosphatidylglycerol (LPG). It acts by transphosphatidylation, releasing exclusively cyclic phosphate products as second products. Induces dermonecrosis, hemolysis, increased vascular permeability, edema, inflammatory response, and platelet aggregation. In Loxosceles rufescens (Mediterranean recluse spider), this protein is Dermonecrotic toxin LruSicTox-alphaIC1a.